The chain runs to 492 residues: N-succinylglutamate 5-semialdehyde dehydrogenase (492 aa).

An NAD(+)-binding site is contributed by 220–225 (GSASTG). Residues glutamate 243 and cysteine 277 contribute to the active site.

The protein belongs to the aldehyde dehydrogenase family. AstD subfamily.

The catalysed reaction is N-succinyl-L-glutamate 5-semialdehyde + NAD(+) + H2O = N-succinyl-L-glutamate + NADH + 2 H(+). It participates in amino-acid degradation; L-arginine degradation via AST pathway; L-glutamate and succinate from L-arginine: step 4/5. Catalyzes the NAD-dependent reduction of succinylglutamate semialdehyde into succinylglutamate. This Salmonella agona (strain SL483) protein is N-succinylglutamate 5-semialdehyde dehydrogenase.